The sequence spans 301 residues: Putative MgpC-like protein MPN_093 (301 aa).

The protein belongs to the MgpC family.

This is Putative MgpC-like protein MPN_093 from Mycoplasma pneumoniae (strain ATCC 29342 / M129 / Subtype 1) (Mycoplasmoides pneumoniae).